The chain runs to 512 residues: Protein SHC1 (512 aa).

Residues 101-113 (EQDEFENDVEDDA) are compositionally biased toward acidic residues. Disordered stretches follow at residues 101–122 (EQDEFENDVEDDASSSLKEKSQ) and 144–164 (DGNSEFHDFAEPPPSQNESVA). Sel1-like repeat units follow at residues 318-353 (PDAQYLLGDAYSSGVFGKIKNRRAFLLFSAAAKRMH), 354-389 (IESVYRTAICYECGLGVTRNAPKAVNFLTFAATKNH), 390-429 (PAAMYKLGVYSYHGLMGLPDDILTKMDGYRWLRRATSMAS), and 433-470 (CGAPFELANIYMTGYKDLIISDPDYAMALYEKAAALGH).

The protein belongs to the SKT5 family.

The protein localises to the cytoplasm. It localises to the cytoplasmic granule membrane. Functionally, required for the activation of chitin synthase III (CHS3) activity during the sporulation process. This Saccharomyces cerevisiae (strain ATCC 204508 / S288c) (Baker's yeast) protein is Protein SHC1 (SHC1).